The chain runs to 367 residues: UDP-N-acetylglucosamine--N-acetylmuramyl-(pentapeptide) pyrophosphoryl-undecaprenol N-acetylglucosamine transferase (367 aa).

Residues 15–17 (TGG), asparagine 126, arginine 169, serine 197, and glutamine 298 contribute to the UDP-N-acetyl-alpha-D-glucosamine site.

It belongs to the glycosyltransferase 28 family. MurG subfamily.

The protein localises to the cell inner membrane. The enzyme catalyses di-trans,octa-cis-undecaprenyl diphospho-N-acetyl-alpha-D-muramoyl-L-alanyl-D-glutamyl-meso-2,6-diaminopimeloyl-D-alanyl-D-alanine + UDP-N-acetyl-alpha-D-glucosamine = di-trans,octa-cis-undecaprenyl diphospho-[N-acetyl-alpha-D-glucosaminyl-(1-&gt;4)]-N-acetyl-alpha-D-muramoyl-L-alanyl-D-glutamyl-meso-2,6-diaminopimeloyl-D-alanyl-D-alanine + UDP + H(+). It participates in cell wall biogenesis; peptidoglycan biosynthesis. In terms of biological role, cell wall formation. Catalyzes the transfer of a GlcNAc subunit on undecaprenyl-pyrophosphoryl-MurNAc-pentapeptide (lipid intermediate I) to form undecaprenyl-pyrophosphoryl-MurNAc-(pentapeptide)GlcNAc (lipid intermediate II). This chain is UDP-N-acetylglucosamine--N-acetylmuramyl-(pentapeptide) pyrophosphoryl-undecaprenol N-acetylglucosamine transferase, found in Bradyrhizobium sp. (strain ORS 278).